Reading from the N-terminus, the 492-residue chain is Cyclic di-GMP phosphodiesterase VC_1295 (492 aa).

The next 6 membrane-spanning stretches (helical) occupy residues 14-34 (IYHA…FALY), 49-69 (EIAT…HTLL), 80-100 (FIQL…LYYN), 111-131 (LKVL…LQLS), 160-180 (LIGL…MVAI), and 205-225 (EFAF…VLWS). Residues 226 to 278 (RMMKEILDHQERSLQAVTQGNLQVRLPVYSNDELGNVAMLTNQMLDSLEATQN) form the HAMP domain. The HD-GYP domain maps to 280-490 (VKTTRDVAIV…FVAIAAHFKD (211 aa)).

It localises to the cell inner membrane. The enzyme catalyses 3',3'-c-di-GMP + 2 H2O = 2 GMP + 2 H(+). Its function is as follows. Phosphodiesterase (PDE) that catalyzes the hydrolysis of cyclic diguanylate (c-di-GMP) to GMP in vitro. Increases motility and decreases biofilm formation in vivo. This is Cyclic di-GMP phosphodiesterase VC_1295 from Vibrio cholerae serotype O1 (strain ATCC 39315 / El Tor Inaba N16961).